The following is a 99-amino-acid chain: Malonate decarboxylase acyl carrier protein (99 aa).

An O-(phosphoribosyl dephospho-coenzyme A)serine modification is found at serine 25.

It belongs to the MdcC family. Post-translationally, covalently binds the prosthetic group of malonate decarboxylase.

The protein resides in the cytoplasm. In terms of biological role, subunit of malonate decarboxylase, it is an acyl carrier protein to which acetyl and malonyl thioester residues are bound via a 2'-(5''-phosphoribosyl)-3'-dephospho-CoA prosthetic group and turn over during the catalytic mechanism. The polypeptide is Malonate decarboxylase acyl carrier protein (Pseudomonas paraeruginosa (strain DSM 24068 / PA7) (Pseudomonas aeruginosa (strain PA7))).